The following is a 184-amino-acid chain: Photosystem I assembly protein Ycf4 (184 aa).

2 helical membrane-spanning segments follow: residues 22–42 (FGWA…GASS) and 57–77 (IVFF…LFIS).

The protein belongs to the Ycf4 family.

Its subcellular location is the plastid. The protein localises to the chloroplast thylakoid membrane. Seems to be required for the assembly of the photosystem I complex. This is Photosystem I assembly protein Ycf4 from Acorus calamus (Sweet flag).